The chain runs to 596 residues: ATP-binding protein Uup (596 aa).

ABC transporter domains lie at 1 to 222 and 290 to 516; these read MSLI…RIEK and FKLD…SKIN. ATP is bound by residues 36 to 43 and 322 to 329; these read GKNGAGKS and GDNGCGKS. Residues 519–596 are C-terminal domain (CTD), binds DNA; that stretch reads IKIKNNFKKE…LEKNIINTKI (78 aa).

This sequence belongs to the ABC transporter superfamily. ABCF family. Uup subfamily.

The protein resides in the cytoplasm. The enzyme catalyses ATP + H2O = ADP + phosphate + H(+). Probably plays a role in ribosome assembly or function. May be involved in resolution of branched DNA intermediates that result from template switching in postreplication gaps. Binds DNA and has ATPase activity. The sequence is that of ATP-binding protein Uup from Buchnera aphidicola subsp. Acyrthosiphon pisum (strain APS) (Acyrthosiphon pisum symbiotic bacterium).